Reading from the N-terminus, the 110-residue chain is Large ribosomal subunit protein uL22 (110 aa).

This sequence belongs to the universal ribosomal protein uL22 family. As to quaternary structure, part of the 50S ribosomal subunit.

Functionally, this protein binds specifically to 23S rRNA; its binding is stimulated by other ribosomal proteins, e.g. L4, L17, and L20. It is important during the early stages of 50S assembly. It makes multiple contacts with different domains of the 23S rRNA in the assembled 50S subunit and ribosome. The globular domain of the protein is located near the polypeptide exit tunnel on the outside of the subunit, while an extended beta-hairpin is found that lines the wall of the exit tunnel in the center of the 70S ribosome. The chain is Large ribosomal subunit protein uL22 from Histophilus somni (strain 2336) (Haemophilus somnus).